Reading from the N-terminus, the 128-residue chain is Small ribosomal subunit protein uS11 (128 aa).

This sequence belongs to the universal ribosomal protein uS11 family. Part of the 30S ribosomal subunit. Interacts with proteins S7 and S18. Binds to IF-3.

Its function is as follows. Located on the platform of the 30S subunit, it bridges several disparate RNA helices of the 16S rRNA. Forms part of the Shine-Dalgarno cleft in the 70S ribosome. The sequence is that of Small ribosomal subunit protein uS11 from Synechococcus sp. (strain JA-3-3Ab) (Cyanobacteria bacterium Yellowstone A-Prime).